The primary structure comprises 317 residues: MADNAQVVPVEEPAATATATATATATTEPEAKSSDQMESQSDNKPPMGTLMALVNILAAGVLPIFTFVLSLTLLGYAVWLLYMRSYDCEDILGLPRVQTLASVGLLAVFVVSNAALFLRRKFPMPALVVMVVVLLLMLFIGLAYAGVNEMQSRRFPATRMWFKLKIMDDHVTWNNIKSCVYDKGACNDLIYGSPNEKPYNRRKMPPIKNGCCMPPETCNMDAINATFWYRRKDEGPPSSMNLMYGDEMMVGRISDCQLWRNDWSILCYDCRSCKFGFIRSVRRKWWQLGIFLIVISILLLMSHLLIFLATFWERFKG.

Residues 1-43 form a disordered region; the sequence is MADNAQVVPVEEPAATATATATATATTEPEAKSSDQMESQSDN. Topologically, residues 1–60 are cytoplasmic; the sequence is MADNAQVVPVEEPAATATATATATATTEPEAKSSDQMESQSDNKPPMGTLMALVNILAAG. The span at 7–28 shows a compositional bias: low complexity; that stretch reads VVPVEEPAATATATATATATTE. A helical transmembrane segment spans residues 61–81; sequence VLPIFTFVLSLTLLGYAVWLL. Over 82 to 96 the chain is Extracellular; that stretch reads YMRSYDCEDILGLPR. A helical transmembrane segment spans residues 97 to 117; the sequence is VQTLASVGLLAVFVVSNAALF. The Cytoplasmic portion of the chain corresponds to 118 to 126; that stretch reads LRRKFPMPA. A helical membrane pass occupies residues 127–147; the sequence is LVVMVVVLLLMLFIGLAYAGV. Topologically, residues 148-287 are extracellular; sequence NEMQSRRFPA…IRSVRRKWWQ (140 aa). An N-linked (GlcNAc...) asparagine glycan is attached at Asn224. The helical transmembrane segment at 288 to 308 threads the bilayer; that stretch reads LGIFLIVISILLLMSHLLIFL. The Cytoplasmic portion of the chain corresponds to 309–317; it reads ATFWERFKG.

The protein belongs to the tetraspanin (TM4SF) family.

It is found in the membrane. Its function is as follows. May be involved in the regulation of cell differentiation. The protein is Tetraspanin-15 (TET15) of Arabidopsis thaliana (Mouse-ear cress).